Reading from the N-terminus, the 209-residue chain is Uridine kinase (209 aa).

An ATP-binding site is contributed by 12-19 (GGSASGKT).

The protein belongs to the uridine kinase family.

The protein resides in the cytoplasm. The catalysed reaction is uridine + ATP = UMP + ADP + H(+). The enzyme catalyses cytidine + ATP = CMP + ADP + H(+). The protein operates within pyrimidine metabolism; CTP biosynthesis via salvage pathway; CTP from cytidine: step 1/3. It participates in pyrimidine metabolism; UMP biosynthesis via salvage pathway; UMP from uridine: step 1/1. The sequence is that of Uridine kinase from Chloroflexus aurantiacus (strain ATCC 29366 / DSM 635 / J-10-fl).